Here is a 141-residue protein sequence, read N- to C-terminus: Hemoglobin subunit alpha (141 aa).

Residues 1 to 141 form the Globin domain; that stretch reads VLSSADKTNI…VSTVLTSKYR (141 aa). At serine 3 the chain carries Phosphoserine. Lysine 7 carries the N6-succinyllysine modification. The residue at position 8 (threonine 8) is a Phosphothreonine. Lysine 11 bears the N6-succinyllysine mark. N6-acetyllysine; alternate is present on lysine 16. Residue lysine 16 is modified to N6-succinyllysine; alternate. A Phosphotyrosine modification is found at tyrosine 24. Serine 35 carries the phosphoserine modification. Lysine 40 is modified (N6-succinyllysine). Serine 49 carries the phosphoserine modification. Histidine 58 is an O2 binding site. Position 87 (histidine 87) interacts with heme b. The residue at position 102 (serine 102) is a Phosphoserine. Threonine 108 is modified (phosphothreonine). Phosphoserine occurs at positions 124 and 131. Phosphothreonine is present on residues threonine 134 and threonine 137. Residue serine 138 is modified to Phosphoserine.

Belongs to the globin family. Heterotetramer of two alpha chains and two beta chains. As to expression, red blood cells.

Functionally, involved in oxygen transport from the lung to the various peripheral tissues. In terms of biological role, hemopressin acts as an antagonist peptide of the cannabinoid receptor CNR1. Hemopressin-binding efficiently blocks cannabinoid receptor CNR1 and subsequent signaling. The sequence is that of Hemoglobin subunit alpha (HBA) from Rousettus aegyptiacus (Egyptian fruit bat).